Here is a 202-residue protein sequence, read N- to C-terminus: Nitrophorin-3 (202 aa).

An N-terminal signal peptide occupies residues 1–23 (MEPYSALLAVTILCLTSTMGVSG). Intrachain disulfides connect C25/C144 and C62/C193. H80 provides a ligand contact to heme.

It belongs to the calycin superfamily. Nitrophorin family. As to quaternary structure, interacts weakly with host coagulation factor IX (F9) (inactive and activated) in the presence of Ca(2+). As to expression, salivary gland (at protein level).

Its subcellular location is the secreted. Functionally, heme-based protein that deliver nitric oxide gas (NO) to the victim while feeding, resulting in vasodilation and inhibition of platelet aggregation. Reversibly binds nitric oxide (NO). Also binds tightly to histamine, which is released by the host to induce wound healing. Exhibits weak anticoagulant activity. The sequence is that of Nitrophorin-3 from Rhodnius prolixus (Triatomid bug).